Consider the following 1049-residue polypeptide: FERM, ARHGEF and pleckstrin domain-containing protein 1 (1049 aa).

Residues 1-37 form a disordered region; that stretch reads MGEIEQKPTPASRLGAPENSGISTLERGQKPPPTPSG. Phosphoserine is present on residues Ser-20 and Ser-23. At Thr-24 the chain carries Phosphothreonine. The 281-residue stretch at 40–320 folds into the FERM domain; it reads MTVKIQMLDD…EHHAFFRLFE (281 aa). Ser-340, Ser-373, Ser-389, Ser-403, Ser-427, Ser-433, and Ser-437 each carry phosphoserine. The tract at residues 361–537 is disordered; sequence FERKHSKIHS…TDDEEEGRRK (177 aa). Polar residues-rich tracts occupy residues 371–395 and 402–412; these read TRSL…SASL and ESPSAQSCQQA. A compositionally biased stretch (low complexity) spans 435–448; sequence SGSKAADGTAAAAP. 2 stretches are compositionally biased toward polar residues: residues 473-492 and 499-514; these read STGS…NSQG and VTLS…QASP. Phosphoserine occurs at positions 513 and 517. Residues 543–734 form the DH domain; it reads KAYYIAKEVS…TEMVAQLHGT (192 aa). A PH 1 domain is found at 763–860; sequence EFIRLGSLSK…WLEDIQMAID (98 aa). Phosphoserine is present on residues Ser-837, Ser-876, and Ser-882. Positions 866–908 are disordered; it reads NGPTPELLASSPPDNKSPDEATAADQESEDDLSASRTSLERQA. A Phosphothreonine modification is found at Thr-887. Ser-893, Ser-900, and Ser-903 each carry phosphoserine. Positions 936 to 1033 constitute a PH 2 domain; sequence ENQLSGNLLR…WMEVIRSATS (98 aa).

Interacts with CADM1. Interacts with RAC1. As to expression, detected in forbrain (at protein level).

The protein localises to the cell membrane. The protein resides in the synapse. It localises to the synaptosome. Its subcellular location is the cytoplasm. It is found in the cytosol. The protein localises to the cell projection. The protein resides in the filopodium. It localises to the dendrite. Its subcellular location is the dendritic spine. Its function is as follows. May play a role in semaphorin signaling. Functions as a guanine nucleotide exchange factor for RAC1. Plays a role in the assembly and disassembly of dendritic filopodia, the formation of dendritic spines, regulation of dendrite length and ultimately the formation of synapses. This Rattus norvegicus (Rat) protein is FERM, ARHGEF and pleckstrin domain-containing protein 1 (Farp1).